Here is a 95-residue protein sequence, read N- to C-terminus: Acylphosphatase (95 aa).

Residues 7-95 (CTMAWVYGSV…RSWDKFAILY (89 aa)) enclose the Acylphosphatase-like domain. Catalysis depends on residues R22 and N40.

The protein belongs to the acylphosphatase family.

It carries out the reaction an acyl phosphate + H2O = a carboxylate + phosphate + H(+). This is Acylphosphatase (acyP) from Klebsiella pneumoniae subsp. pneumoniae (strain ATCC 700721 / MGH 78578).